We begin with the raw amino-acid sequence, 455 residues long: Fez family zinc finger protein 2 (455 aa).

Residues 1-22 (MASSASLETMVPPACPRAGASP) are disordered. The short motif at 27 to 42 (TLAFSIERIMAKTSEP) is the Engrailed homology 1 repressor element. 6 consecutive C2H2-type zinc fingers follow at residues 272 to 294 (FTCE…MPVH), 300 to 322 (FVCK…KIIH), 328 to 350 (HKCN…IRIH), 356 to 378 (FVCE…KLTH), 384 to 406 (YKCT…MHTH), and 412 to 435 (FTCA…RKLH).

It belongs to the krueppel C2H2-type zinc-finger protein family. As to expression, highly expressed in neocortical layer V, moderately expressed in layer VI. Expressed in subcortically projecting neurons.

It is found in the nucleus. Its function is as follows. Transcription repressor. Required for the specification of corticospinal motor neurons and other subcerebral projection neurons. May play a role in layer and neuronal subtype-specific patterning of subcortical projections and axonal fasciculation. Controls the development of dendritic arborization and spines of large layer V pyramidal neurons. Plays a role in rostro-caudal patterning of the diencephalon and in prethalamic formation. The sequence is that of Fez family zinc finger protein 2 (Fezf2) from Mus musculus (Mouse).